Reading from the N-terminus, the 108-residue chain is MILGQAAETLAQSHLEQQGLTFVERNVRYPFGEIDLVMRHKNHWVFVEVKYRSATQYGGALQAVSKAQIGRIRLAASHYLQIHRLDVPCRFDVVAIEGHQIHWLVDAF.

The protein belongs to the UPF0102 family.

This chain is UPF0102 protein Sputcn32_3693, found in Shewanella putrefaciens (strain CN-32 / ATCC BAA-453).